Reading from the N-terminus, the 137-residue chain is MTYNRTIHFSDTDAAGVVYFAAFLSICHEAYENSLQVAGIDLKTFFTSSDIAIPIVHADIDFYQPLFCGDRIQINLTPTQLNETEFEIKYQVFNENNLDKLIAKATTKHVSINPKIRQRTSLSLSITQWLRSNQDDC.

Aspartate 13 is a catalytic residue.

The protein belongs to the 4-hydroxybenzoyl-CoA thioesterase family. DHNA-CoA hydrolase subfamily.

It carries out the reaction 1,4-dihydroxy-2-naphthoyl-CoA + H2O = 1,4-dihydroxy-2-naphthoate + CoA + H(+). The protein operates within cofactor biosynthesis; phylloquinone biosynthesis. Its pathway is quinol/quinone metabolism; 1,4-dihydroxy-2-naphthoate biosynthesis; 1,4-dihydroxy-2-naphthoate from chorismate: step 7/7. Catalyzes the hydrolysis of 1,4-dihydroxy-2-naphthoyl-CoA (DHNA-CoA) to 1,4-dihydroxy-2-naphthoate (DHNA), a reaction involved in phylloquinone (vitamin K1) biosynthesis. This Crocosphaera subtropica (strain ATCC 51142 / BH68) (Cyanothece sp. (strain ATCC 51142)) protein is 1,4-dihydroxy-2-naphthoyl-CoA hydrolase.